A 168-amino-acid chain; its full sequence is MTQHPPGDDRTNRIVAVTLDEESIGRSGPDIEHERAIAIYDLVEENLFAPEGADGQGPFTLHLGITANRLMFDIRKEDGTPVVTHLLSLSPFRRIVKDYFMICDSYYNAIRTATPDKIEAIDMGRRGIHDEGSRTLQERLKGKVRVDFETSRRLFTLITVLHWKGEGQ.

It belongs to the UPF0262 family.

This Bradyrhizobium sp. (strain BTAi1 / ATCC BAA-1182) protein is UPF0262 protein BBta_0898.